We begin with the raw amino-acid sequence, 357 residues long: Tribbles homolog 3 (357 aa).

Residues 1 to 63 (MRASPLAVPA…PAPVHAPDVT (63 aa)) form a disordered region. The tract at residues 1 to 127 (MRASPLAVPA…GHVARPAEVL (127 aa)) is interaction with DDIT3/CHOP. The Protein kinase domain maps to 68-316 (LGPYVLLEPE…SGILLHPWLR (249 aa)). The segment at 333–357 (DQVVPEGPGLEEAEEEGERDMGLYG) is disordered. Residues 341 to 350 (GLEEAEEEGE) are compositionally biased toward acidic residues.

Belongs to the protein kinase superfamily. CAMK Ser/Thr protein kinase family. Tribbles subfamily. Interacts with AKT1, AKT2, MAP2K1 and MAP2K7. Interacts with ATF4. Interacts with DDIT3/CHOP and inhibits its interaction with EP300/P300. Interacts with APOBEC3C. Interacts (via N-terminus) with APOBEC3A. Interacts with RELA.

Its subcellular location is the nucleus. Functionally, inactive protein kinase which acts as a regulator of the integrated stress response (ISR), a process for adaptation to various stress. Inhibits the transcriptional activity of DDIT3/CHOP and is involved in DDIT3/CHOP-dependent cell death during ER stress. May play a role in programmed neuronal cell death but does not appear to affect non-neuronal cells. Acts as a negative feedback regulator of the ATF4-dependent transcription during the ISR: while TRIB3 expression is promoted by ATF4, TRIB3 protein interacts with ATF4 and inhibits ATF4 transcription activity. Disrupts insulin signaling by binding directly to Akt kinases and blocking their activation. May bind directly to and mask the 'Thr-308' phosphorylation site in AKT1. Interacts with the NF-kappa-B transactivator p65 RELA and inhibits its phosphorylation and thus its transcriptional activation activity. Interacts with MAPK kinases and regulates activation of MAP kinases. Can inhibit APOBEC3A editing of nuclear DNA. The chain is Tribbles homolog 3 (TRIB3) from Bos taurus (Bovine).